The sequence spans 504 residues: MSNIRPDEISSILKQQIERYNESVKIENTGTVLQVGDGIARIYGLDNIMAGELLEFEEKTIGIALNLETDNVGAVLMGDGRDILEGSSVKGTGKIAQIGVGDNLLGRVLNALGNPIDGKPNPNSTDYRLIEFNAPGIVSRRSVCEPIQTGITAIDAMIPIGRGQRELIIGDRQTGKTSIALDTIINQKEENVICIYVAIGQKASSVAQAVTLLEEKDALKYTVVIAANANEPATLQYIAPYTGAAIAEHFMYKGLATLIIYDDLTKQAQAYRQMSLLLKRPPGREAYPGDVFYLHSRLLERAAKLNNELGGGSMTALPIIETQAGDVSAYIPTNVISITDGQIFLSSDLFNAGIRPSINVGISVSRVGSAAQIKAMKQVAGKLKLELAQFDELQAFSQFASDLDKSTQAQLARGQRLRELLKQPQASPISVYEQIPMIYAGINGFLDDIKIDRISLFIKKLQECLSNSYPHFYEAIKESKQLSKENEEVLKKAITEVKKNLSFI.

An ATP-binding site is contributed by 170 to 177 (GDRQTGKT).

It belongs to the ATPase alpha/beta chains family. In terms of assembly, F-type ATPases have 2 components, CF(1) - the catalytic core - and CF(0) - the membrane proton channel. CF(1) has five subunits: alpha(3), beta(3), gamma(1), delta(1), epsilon(1). CF(0) has four main subunits: a, b, b' and c.

It is found in the plastid. The protein localises to the chloroplast thylakoid membrane. It carries out the reaction ATP + H2O + 4 H(+)(in) = ADP + phosphate + 5 H(+)(out). Functionally, produces ATP from ADP in the presence of a proton gradient across the membrane. The alpha chain is a regulatory subunit. This chain is ATP synthase subunit alpha, chloroplastic, found in Cyanidium caldarium (Red alga).